Reading from the N-terminus, the 108-residue chain is Small ribosomal subunit protein mS33 (108 aa).

Residues 84–108 form a disordered region; that stretch reads LRARDKGAPKKKRTAPSAADAKKKK.

The protein belongs to the mitochondrion-specific ribosomal protein mS33 family. Component of the mitochondrial small ribosomal subunit (mt-SSU). Mature N.crassa 74S mitochondrial ribosomes consist of a small (37S) and a large (54S) subunit. The 37S small subunit contains a 16S ribosomal RNA (16S mt-rRNA) and 32 different proteins. The 54S large subunit contains a 23S rRNA (23S mt-rRNA) and 42 different proteins.

It localises to the mitochondrion. In terms of biological role, component of the mitochondrial ribosome (mitoribosome), a dedicated translation machinery responsible for the synthesis of mitochondrial genome-encoded proteins, including at least some of the essential transmembrane subunits of the mitochondrial respiratory chain. The mitoribosomes are attached to the mitochondrial inner membrane and translation products are cotranslationally integrated into the membrane. The chain is Small ribosomal subunit protein mS33 (rsm27) from Neurospora crassa (strain ATCC 24698 / 74-OR23-1A / CBS 708.71 / DSM 1257 / FGSC 987).